The chain runs to 156 residues: Large ribosomal subunit protein uL22 (156 aa).

It belongs to the universal ribosomal protein uL22 family. Part of the 50S ribosomal subunit.

In terms of biological role, this protein binds specifically to 23S rRNA. It makes multiple contacts with different domains of the 23S rRNA in the assembled 50S subunit and ribosome. Its function is as follows. The globular domain of the protein is located near the polypeptide exit tunnel on the outside of the subunit, while an extended beta-hairpin is found that lines the wall of the exit tunnel in the center of the 70S ribosome. The chain is Large ribosomal subunit protein uL22 from Methanocaldococcus jannaschii (strain ATCC 43067 / DSM 2661 / JAL-1 / JCM 10045 / NBRC 100440) (Methanococcus jannaschii).